The following is a 324-amino-acid chain: MIIVLGIRTDLALEARELYKEREIPGVSIREEGEEGIKITRVKILDERGEKAMGKPVGDYITIEAPGLLERDLDLEERVAKVLANIISELAQLKKDSHVLVVGLGNWNVTPDALGPRVVSNIVVTRHLKEYAPLQFGDEIRSVSAFSPGVLGITGIETAEILKGVVDRVKPDLVITIDALASRRLERLSTTIQISNTGISPGSGVGNRRLSITSESLGVPVIAIGVPTVVDAVTIAHDTIEYLVKELSEQTSKESVFYKVLENMNKQEKYSLIEEVLSPYVQNLVVTPKEIDLLIKNIALVISRGINLALQPGLTEKEMNQLLH.

Positions 1–10 (MIIVLGIRTD) are excised as a propeptide.

It belongs to the peptidase A25 family. In terms of assembly, homotetramer. Post-translationally, autoproteolytically processed. The inactive tetrameric zymogen termed p46 autoprocesses to a smaller form termed p41, which is active only during spore germination.

It catalyses the reaction Endopeptidase action with P4 Glu or Asp, P1 preferably Glu &gt; Asp, P1' hydrophobic and P2' Ala.. In terms of biological role, initiates the rapid degradation of small, acid-soluble proteins during spore germination. The polypeptide is Germination protease (Caldanaerobacter subterraneus subsp. tengcongensis (strain DSM 15242 / JCM 11007 / NBRC 100824 / MB4) (Thermoanaerobacter tengcongensis)).